A 524-amino-acid chain; its full sequence is MARARRTKRASVTDIYKGCKASGTCPPDVINKVEQNTLADKILKYGSVGVFFGGLGISTGKGTGGPTGYIPLGQGPGVRVGATPTVVRPGVIPEIIGPTELIPVDSVTPIDPAAPSIVTLTDSSAGADLLPGEVETIAEVHPVPIDNVELDTPLVSGDRHAILEVTDANPPFRRTVTRTQYHNPAFEIISESTPLIGESTPSDHVFVFEGSGGVQVGDANESIELDTFPSRYSFDIEEPTPPRRVSTPIERISQEFRTLRRALYNRRLTEQVQVRDPLFIRSPSRLVRFQFDNPVFDEEVTQIFERDVAAVEEPPDRDFLDIERLGRPILTETAEGRVRVSRLGQRASLSTRSGARVGARVHFFTDISTINAEEPIELELLGEHSGDSSVVQEPFESTILDVNIDNIPESLDTNIAETSVDYDSADLLLDNGVEDFSRSQLVIGPSDRSLPSITVPQFESPRETIVYIQDIEGNTVVYPKYEERPTIILPTPSGPAIIQSPTHSSFDYYLHPSLRRKKRKRKYL.

A Nuclear localization signal motif is present at residues 1-10 (MARARRTKRA). Cysteine 19 and cysteine 25 are joined by a disulfide. The Nuclear localization signal signature appears at 516 to 523 (RKKRKRKY).

It belongs to the papillomaviridae L2 protein family. Interacts with major capsid protein L1. Interacts with E2; this interaction inhibits E2 transcriptional activity but not the DNA replication function E2. Interacts with host GADD45GIP1. Interacts with host HSPA8; this interaction is required for L2 nuclear translocation. Interacts with host importins KPNB2 and KPNB3. Forms a complex with importin alpha2-beta1 heterodimers via interaction with the importin alpha2 adapter. Interacts with host DYNLT1; this interaction is essential for virus intracellular transport during entry. Interacts (via C-terminus) with host retromer subunits VPS35 and VPS29. Post-translationally, highly phosphorylated.

It localises to the virion. The protein resides in the host nucleus. The protein localises to the host early endosome. It is found in the host Golgi apparatus. Minor protein of the capsid that localizes along the inner surface of the virion, within the central cavities beneath the L1 pentamers. Plays a role in capsid stabilization through interaction with the major capsid protein L1. Once the virion enters the host cell, L2 escorts the genomic DNA into the nucleus by promoting escape from the endosomal compartments and traffic through the host Golgi network. Mechanistically, the C-terminus of L2 possesses a cell-penetrating peptide that protudes from the host endosome, interacts with host cytoplasmic retromer cargo and thereby mediates the capsid delivery to the host trans-Golgi network. Plays a role through its interaction with host dynein in the intracellular microtubule-dependent transport of viral capsid toward the nucleus. Mediates the viral genome import into the nucleus through binding to host importins. Once within the nucleus, L2 localizes viral genomes to host PML bodies in order to activate early gene expression for establishment of infection. Later on, promotes late gene expression by interacting with the viral E2 protein and by inhibiting its transcriptional activation functions. During virion assembly, encapsidates the genome by direct interaction with the viral DNA. In Human papillomavirus 22, this protein is Minor capsid protein L2.